The following is a 391-amino-acid chain: MGYPEVERRELLPAAAPRERGSQGCGCGGAPARAGEGNSCLLFLGFFGLSLALHLLTLCCYLELRSELRRERGAESRLGGSGTPGTSGTLSSLGGLDPDSPITSHLGQPSPKQQPLEPGEAALHSDSQDGHQMALLNFFFPDEKPYSEEESRRVRRNKRSKSNEGADGPVKNKKKGKKAGPPGPNGPPGPPGPPGPQGPPGIPGIPGIPGTTVMGPPGPPGPPGPQGPPGLQGPSGAADKAGTRENQPAVVHLQGQGSAIQVKNDLSGGVLNDWSRITMNPKVFKLHPRSGELEVLVDGTYFIYSQVEVYYINFTDFASYEVVVDEKPFLQCTRSIETGKTNYNTCYTAGVCLLKARQKIAVKMVHADISINMSKHTTFFGAIRLGEAPAS.

The Cytoplasmic portion of the chain corresponds to 1 to 41; that stretch reads MGYPEVERRELLPAAAPRERGSQGCGCGGAPARAGEGNSCL. Residues 42–62 traverse the membrane as a helical; Signal-anchor for type II membrane protein segment; that stretch reads LFLGFFGLSLALHLLTLCCYL. At 63–391 the chain is on the extracellular side; sequence ELRSELRRER…AIRLGEAPAS (329 aa). Disordered stretches follow at residues 73–127 and 146–245; these read GAES…HSDS and YSEE…GTRE. A compositionally biased stretch (low complexity) spans 86–101; it reads TSGTLSSLGGLDPDSP. Positions 102 to 113 are enriched in polar residues; sequence ITSHLGQPSPKQ. The Collagen-like domain maps to 180–229; sequence GPPGPNGPPGPPGPPGPQGPPGIPGIPGIPGTTVMGPPGPPGPPGPQGPP. Composition is skewed to pro residues over residues 181–203 and 216–228; these read PPGP…PGIP and PPGP…PQGP. Residues 249 to 385 enclose the THD domain; that stretch reads AVVHLQGQGS…HTTFFGAIRL (137 aa). N313 carries N-linked (GlcNAc...) asparagine glycosylation. C332 and C346 form a disulfide bridge. N-linked (GlcNAc...) asparagine glycosylation is present at N372.

Belongs to the tumor necrosis factor family. Homotrimer. The homotrimers may then dimerize and form higher-order oligomers. Post-translationally, N-glycosylated. In terms of processing, processing by furin produces a secreted form. Not abundant; expressed in specific cell types of ectodermal (but not mesodermal) origin of keratinocytes, hair follicles, sweat glands. Also in adult heart, liver, muscle, pancreas, prostate, fetal liver, uterus, small intestine and umbilical cord.

It localises to the cell membrane. The protein resides in the secreted. Cytokine which is involved in epithelial-mesenchymal signaling during morphogenesis of ectodermal organs. Functions as a ligand activating the DEATH-domain containing receptors EDAR and EDA2R. May also play a role in cell adhesion. Its function is as follows. Binds only to the receptor EDAR, while isoform 3 binds exclusively to the receptor EDA2R. Functionally, binds only to the receptor EDA2R. This is Ectodysplasin-A (EDA) from Homo sapiens (Human).